We begin with the raw amino-acid sequence, 1774 residues long: Receptor-mediated endocytosis protein 6 homolog (1774 aa).

Residues 157–396 (ELLLKLLREL…EDVVAILPQQ (240 aa)) form the Ras-GAP domain. Disordered regions lie at residues 444-480 (IPKQ…NNRS), 517-564 (PLAN…PAPT), 661-727 (AAHS…HHHG), 784-811 (ENTL…RNFS), 869-947 (AEID…EDSA), 983-1102 (ESSF…EEQP), 1115-1142 (QEEQ…SMEQ), and 1214-1342 (RAGA…GGRS). 2 stretches are compositionally biased toward low complexity: residues 519 to 533 (ANGQ…SASN) and 540 to 557 (SSHS…AAPA). Basic and acidic residues predominate over residues 674–683 (QQERDVHENE). Residues 688-713 (DMVSANVSGRGTPNISGRDTPSSQVT) are compositionally biased toward polar residues. Positions 794 to 809 (RGGDRGDRGDRDRDRN) are enriched in basic and acidic residues. A compositionally biased stretch (gly residues) spans 887 to 905 (PGSGGGAGVPEAGGGGGVV). Basic and acidic residues predominate over residues 929–944 (DPDRERLRNGSERSQE). Residues 1011–1027 (MRRQTSAESSISNQSLN) show a composition bias toward polar residues. The span at 1038–1047 (LAKHHHHHQH) shows a compositional bias: basic residues. A compositionally biased stretch (basic and acidic residues) spans 1048 to 1060 (RDRDRDRDRDRDH). Residues 1061–1076 (REHHHKSAALKKKKHQ) are compositionally biased toward basic residues. The span at 1077-1087 (EHKEHQHRDLI) shows a compositional bias: basic and acidic residues. Positions 1091 to 1101 (DCSEDKDEEEQ) are enriched in acidic residues. Low complexity predominate over residues 1115 to 1125 (QEEQQQQQQQQ). Basic and acidic residues predominate over residues 1246 to 1291 (SADKEQQPYRDRERERDRERDRERDRDRERDRDRDRDRDRDREHHS). Over residues 1310–1335 (SSSSKNNAIAIAAPSSINPNPSPSSA) the composition is skewed to low complexity. Residues 1516 to 1546 (RHRQQLLLRSEQLEQLEVRLRSEARSCQRCL) adopt a coiled-coil conformation. Residues 1635 to 1774 (VSRDTVLSAH…KFIKTMDYLD (140 aa)) enclose the VPS9 domain.

This sequence belongs to the GAPVD1 family.

The protein resides in the membrane. In terms of biological role, acts both as a GTPase-activating protein (GAP) and a guanine nucleotide exchange factor (GEF), and participates in endocytosis. In Drosophila pseudoobscura pseudoobscura (Fruit fly), this protein is Receptor-mediated endocytosis protein 6 homolog.